We begin with the raw amino-acid sequence, 397 residues long: Serpin B10 (397 aa).

A Nuclear localization signal motif is present at residues 74–77 (KKRK).

Belongs to the serpin family. Ov-serpin subfamily.

It localises to the nucleus. The protein localises to the cytoplasm. Functionally, protease inhibitor that may play a role in the regulation of protease activities during hematopoiesis and apoptosis induced by TNF. May regulate protease activities in the cytoplasm and in the nucleus. The polypeptide is Serpin B10 (SERPINB10) (Rhinolophus ferrumequinum (Greater horseshoe bat)).